The primary structure comprises 275 residues: Transmembrane protein 45A (275 aa).

The next 5 helical transmembrane spans lie at 7–27 (HALPGTFFFIIGLWWCTKSIL), 51–71 (ILEGITIVGMALTGMAGEQFI), 100–120 (FFFGLLGVADILCFTISSLPV), 150–170 (IFVHQLLVLVVFLTGLVAFLE), and 218–238 (ILFLTICFCWHYAVTIVIVGM).

It belongs to the TMEM45 family.

It is found in the membrane. The protein is Transmembrane protein 45A (TMEM45A) of Homo sapiens (Human).